Consider the following 307-residue polypeptide: tRNA dimethylallyltransferase 1 (307 aa).

Position 11–18 (11–18 (GPTASGKT)) interacts with ATP. 13-18 (TASGKT) lines the substrate pocket. Interaction with substrate tRNA regions lie at residues 36 to 39 (DSRQ) and 159 to 163 (QRAIR).

It belongs to the IPP transferase family. As to quaternary structure, monomer. It depends on Mg(2+) as a cofactor.

The catalysed reaction is adenosine(37) in tRNA + dimethylallyl diphosphate = N(6)-dimethylallyladenosine(37) in tRNA + diphosphate. Catalyzes the transfer of a dimethylallyl group onto the adenine at position 37 in tRNAs that read codons beginning with uridine, leading to the formation of N6-(dimethylallyl)adenosine (i(6)A). This Parabacteroides distasonis (strain ATCC 8503 / DSM 20701 / CIP 104284 / JCM 5825 / NCTC 11152) protein is tRNA dimethylallyltransferase 1.